The primary structure comprises 1335 residues: MDNNNWRPSLPNGEPAMDTGDWRTQLPPDSRQKIVNKIMETLKKHLPFSGPEGINELRRIAARFEEKIFSGALNQTDYLRKISMKMLTMETKSQNAAGSSAAIPAANNGTSIDSIPTNQGQLLPGSLSTNQSQAPQPLLSQTMQNNTASGMTGSTALPSSMPPVSSITNNNTTSVVNQNANMQNVAGMLQDSSGQHGLSSNMFSGPQRQMLGRPHAMSSQQQQQPYLYQQQLQQQLLKQNFQSGNVPNPNSLLPSHIQQQQQNVLQPNQLHSSQQPGVPTSATQPSTVNSAPLQGLHTNQQSSPQLSSQQTTQSMLRQHQSSMLRQHPQSQQASGIHQQQSSLPQQSISPLQQQPTQLMRQQAANSSGIQQKQMMGQHVVGDMQQQHQQRLLNQQNNVMNIQQQQSQQQPLQQPQQQQKQQPPAQQQLMSQQNSLQATHQNPLGTQSNVAGLQQPQQQMLNSQVGNSSLQNNQHSVHMLSQPTVGLQRTHQAGHGLYSSQGQQSQNQPSQQQMMPQLQSHHQQLGLQQQPNLLQQDVQQRLQASGQVTGSLLPPQNVVDQQRQLYQSQRTLPEMPSSSLDSTAQTESANGGDWQEEVYQKIKSMKETYLPDLNEIYQRVAAKLQQDSMPQQQRSDQLEKLRQFKTMLERMIQFLSVSKSNIMPALKDKVAYYEKQIIGFLNMHRPRKPVQQGQLPQSQMQPMQQPQSQTVQDQSHDNQTNPQMQSMSMQGAGPRAQQSSMTNMQSNVLSSRPGVSAPQQNIPSSIPASSLESGQGNTLNNGQQVAMGSMQQNTSQLVNNSSASAQSGLSTLQSNVNQPQLSSSLLQHQHLKQQQDQQMQLKQQFQQRQMQQQQLQARQQQQQQQLQARQQAAQLQQMNDMNDLTSRQGMNVSRGMFQQHSMQGQRANYPLQQLKPGAVSSPQLLQGASPQMSQHLSPQVDQKNTVNKMGTPLQPANSPFVVPSPSSTPLAPSPMQVDSEKPGSSSLSMGNIARQQATGMQGVVQSLAIGTPGISASPLLQEFTSPDGNILNSSTITSGKPSATELPIERLIRAVKSISPQALSSAVSDIGSVVSMVDRIAGSAPGNGSRASVGEDLVAMTKCRLQARNFMTQEGMMATKKMKRHTTAMPLSVASLGGSVGDNYKQFAGSETSDLESTATSDGKKARTETEHALLEEIKEINQRLIDTVVEISDDEDAADPSEVAISSIGCEGTTVRFSFIAVSLSPALKAHLSSTQMSPIQPLRLLVPCSYPNGSPSLLDKLPVETSKENEDLSSKAMARFNILLRSLSQPMSLKDIAKTWDACARAVICEYAQQFGGGTFSSKYGTWEKYVAAS.

8 disordered regions span residues 1 to 27, 109 to 172, 190 to 225, 241 to 389, 401 to 448, 496 to 525, 567 to 591, and 683 to 815; these read MDNN…TQLP, GTSI…NNNT, QDSS…QQQP, FQSG…QHQQ, IQQQ…TQSN, LYSS…QQLG, SQRT…ANGG, and HRPR…QSNV. Composition is skewed to polar residues over residues 110–158, 190–207, and 241–257; these read TSID…TALP, QDSS…SGPQ, and FQSG…PSHI. Residues 258–270 show a composition bias toward low complexity; it reads QQQQQNVLQPNQL. Polar residues predominate over residues 271–299; it reads HSSQQPGVPTSATQPSTVNSAPLQGLHTN. Low complexity predominate over residues 300–314; sequence QQSSPQLSSQQTTQS. Over residues 315–328 the composition is skewed to polar residues; sequence MLRQHQSSMLRQHP. A compositionally biased stretch (low complexity) spans 329–362; the sequence is QSQQASGIHQQQSSLPQQSISPLQQQPTQLMRQQ. Residues 363–374 show a composition bias toward polar residues; that stretch reads AANSSGIQQKQM. The span at 401-436 shows a compositional bias: low complexity; that stretch reads IQQQQSQQQPLQQPQQQQKQQPPAQQQLMSQQNSLQ. Polar residues predominate over residues 437–448; sequence ATHQNPLGTQSN. Residues 498–525 are compositionally biased toward low complexity; that stretch reads SSQGQQSQNQPSQQQMMPQLQSHHQQLG. Over residues 567–588 the composition is skewed to polar residues; the sequence is SQRTLPEMPSSSLDSTAQTESA. The span at 688–712 shows a compositional bias: low complexity; the sequence is PVQQGQLPQSQMQPMQQPQSQTVQD. Composition is skewed to polar residues over residues 716–728, 735–749, and 756–815; these read DNQT…SMSM, AQQS…NVLS, and APQQ…QSNV. The stretch at 834-882 forms a coiled coil; sequence QDQQMQLKQQFQQRQMQQQQLQARQQQQQQQLQARQQAAQLQQMNDMND. Disordered stretches follow at residues 947-986 and 1146-1165; these read KMGT…SSSL and FAGS…GKKA. The span at 957–973 shows a compositional bias: low complexity; that stretch reads SPFVVPSPSSTPLAPSP. Residues 1148–1160 are compositionally biased toward polar residues; that stretch reads GSETSDLESTATS.

It belongs to the plant Mediator complex subunit 15 family. In terms of assembly, component of the Mediator complex.

The protein localises to the nucleus. Its function is as follows. Component of the Mediator complex, a coactivator involved in the regulated transcription of nearly all RNA polymerase II-dependent genes. Mediator functions as a bridge to convey information from gene-specific regulatory proteins to the basal RNA polymerase II transcription machinery. The Mediator complex, having a compact conformation in its free form, is recruited to promoters by direct interactions with regulatory proteins and serves for the assembly of a functional preinitiation complex with RNA polymerase II and the general transcription factors. This is Mediator of RNA polymerase II transcription subunit 15a (MED15A) from Arabidopsis thaliana (Mouse-ear cress).